Consider the following 1082-residue polypeptide: Mediator of RNA polymerase II transcription subunit 14 (1082 aa).

Disordered regions lie at residues M1–P80 and E319–L343. T2 bears the N-acetylthreonine mark. S7 bears the Phosphoserine mark. Residues N13 to S28 show a composition bias toward basic and acidic residues. A compositionally biased stretch (polar residues) spans E29–K59. Low complexity predominate over residues T321–N340. A Phosphothreonine modification is found at T1036.

This sequence belongs to the Mediator complex subunit 14 family. In terms of assembly, component of the Mediator complex, which is composed of at least 21 subunits that form three structurally distinct submodules. The Mediator head module contains MED6, MED8, MED11, SRB4/MED17, SRB5/MED18, ROX3/MED19, SRB2/MED20 and SRB6/MED22, the middle module contains MED1, MED4, NUT1/MED5, MED7, CSE2/MED9, NUT2/MED10, SRB7/MED21 and SOH1/MED31, and the tail module contains MED2, PGD1/MED3, RGR1/MED14, GAL11/MED15 and SIN4/MED16. The head and the middle modules interact directly with RNA polymerase II, whereas the elongated tail module interacts with gene-specific regulatory proteins.

The protein resides in the nucleus. Its function is as follows. Component of the Mediator complex, a coactivator involved in the regulated transcription of nearly all RNA polymerase II-dependent genes. Mediator functions as a bridge to convey information from gene-specific regulatory proteins to the basal RNA polymerase II transcription machinery. The Mediator complex, having a compact conformation in its free form, is recruited to promoters by direct interactions with regulatory proteins and serves for the assembly of a functional preinitiation complex with RNA polymerase II and the general transcription factors. The Mediator complex unfolds to an extended conformation and partially surrounds RNA polymerase II, specifically interacting with the unphosphorylated form of the C-terminal domain (CTD) of RNA polymerase II. The Mediator complex dissociates from the RNA polymerase II holoenzyme and stays at the promoter when transcriptional elongation begins. This Saccharomyces cerevisiae (strain ATCC 204508 / S288c) (Baker's yeast) protein is Mediator of RNA polymerase II transcription subunit 14 (RGR1).